A 1320-amino-acid polypeptide reads, in one-letter code: Centrosomin (1320 aa).

Residues 20 to 41 form a disordered region; it reads ASFDVPRPPGGGNSPLPSQGRS. A coiled-coil region spans residues 97 to 516; that stretch reads RKTVDVKMEL…SSQEKEIKKL (420 aa). Residues 517–530 show a composition bias toward basic and acidic residues; that stretch reads NQENEQSANKENDC. The segment at 517 to 554 is disordered; it reads NQENEQSANKENDCAKTVISPSSSGRSMSDNEASSQEM. The span at 535–554 shows a compositional bias: polar residues; that stretch reads ISPSSSGRSMSDNEASSQEM. A Phosphoserine modification is found at Ser-545. Coiled coils occupy residues 626–654 and 712–983; these read EADL…KVDV and NSLL…LKLA. Positions 644-656 match the Nuclear localization signal motif; it reads RNKLLQRKVDVLF. A Phosphothreonine modification is found at Thr-782. Position 785 is a phosphoserine (Ser-785). Positions 810–823 are enriched in basic and acidic residues; sequence KKELEKRRSSEGQR. 2 disordered regions span residues 810-849 and 863-893; these read KKEL…SEPD and SNSL…NRNS. The span at 831–843 shows a compositional bias: polar residues; the sequence is LPSQQFDNQSESE. Ser-874, Ser-876, Ser-878, Ser-1191, Ser-1234, Ser-1237, and Ser-1239 each carry phosphoserine. The interval 1220–1249 is disordered; that stretch reads VEMKTEGSASPKAKSEESTSPDSKSNVATG. Residues 1237-1247 show a composition bias toward polar residues; it reads STSPDSKSNVA.

Monomer. Developing visceral mesoderm of the midgut, the central and peripheral nervous system, and developing gonads. Isoform J: Expressed in ovaries, testis and embryos. Isoform A: Expressed in testis only.

The protein resides in the cytoplasm. It is found in the cytoskeleton. The protein localises to the microtubule organizing center. It localises to the centrosome. Its subcellular location is the flagellum basal body. The protein resides in the perinuclear region. Functionally, core component of the centrosome throughout spermatogenesis. May participate in mitotic spindle assembly and the mechanics of morphogenesis through an interaction with microtubules, either directly or indirectly. Is a target of several homeotic genes. In Drosophila melanogaster (Fruit fly), this protein is Centrosomin (cnn).